The sequence spans 168 residues: Protein-export protein SecB (168 aa).

It belongs to the SecB family. Homotetramer, a dimer of dimers. One homotetramer interacts with 1 SecA dimer.

Its subcellular location is the cytoplasm. Its function is as follows. One of the proteins required for the normal export of preproteins out of the cell cytoplasm. It is a molecular chaperone that binds to a subset of precursor proteins, maintaining them in a translocation-competent state. It also specifically binds to its receptor SecA. This Saccharophagus degradans (strain 2-40 / ATCC 43961 / DSM 17024) protein is Protein-export protein SecB.